The sequence spans 120 residues: MSEQAGSSVAVIQERQALLARQHDAVAEADRELADVLASAHAAMRESVRRLDAIAAELDRAVPDQDQLAVDTPMGAREFQTFLVAKQREIVAVVAAAHELDRAKSAVLKRLRAQYTEPAR.

To M.tuberculosis Rv0026 and Rv0739.

This is an uncharacterized protein from Mycobacterium tuberculosis (strain CDC 1551 / Oshkosh).